The following is a 975-amino-acid chain: E3 ubiquitin-protein ligase BRE1A (975 aa).

Residues 1–30 (MSGIGNKRAAGEPGTSMPPEKKAAVEDSGT) form a disordered region. An N6-acetyllysine modification is found at K21. Phosphoserine is present on S41. Residues 43 to 90 (TEELDIRTLQTKNRKLAEMLDQRQAIEDELREHIEKLERRQATDDASL) are a coiled coil. The tract at residues 125 to 155 (KALVVPEPEPDSDSNQERKDDRERGEGQEPA) is disordered. A phosphoserine mark is found at S136 and S138. Positions 139–151 (NQERKDDRERGEG) are enriched in basic and acidic residues. Coiled-coil stretches lie at residues 168 to 375 (EEME…EQVV) and 429 to 898 (SLHK…TTKK). An N6-acetyllysine mark is found at K348 and K510. Residues 507 to 622 (DLNKTRLRSG…GKHDDGRKKE (116 aa)) form a disordered region. S522 carries the post-translational modification Phosphoserine. The segment covering 527–540 (EDPKDEPAELKPDS) has biased composition (basic and acidic residues). Residues 543–552 (LSSQSSASKA) show a composition bias toward low complexity. The segment covering 558–622 (NEIKSKRDEE…GKHDDGRKKE (65 aa)) has biased composition (basic and acidic residues). Phosphoserine is present on S562. Residues 922–961 (CPCCNMRKKDAVLTKCFHVFCFECVKTRYDTRQRKCPKCN) form an RING-type zinc finger.

This sequence belongs to the BRE1 family. As to quaternary structure, component of the RNF20/40 complex (also known as BRE1 complex) probably composed of 2 copies of RNF20/BRE1A and 2 copies of RNF40/BRE1B. Interacts with UBE2E1/UBCH6. Interacts with p53/TP53 and WAC. Interacts with PAF1; the interaction mediates the association of the PAF1 and RNF20/40 complexes which is a prerequsite for recruitment of UBE2A/B. Interacts with isoform 1 and isoform 2 of PA2G4. Interacts with FBXL19. In terms of assembly, (Microbial infection) Interacts with human herpesvirus 8 (KSHV) protein RTA/ORF50; this interaction targets the SMC5-SMC6 complex for proteasomal degradation. As to expression, expressed in the normal brain and also in malignant gliomas (at protein level).

It is found in the nucleus. The enzyme catalyses S-ubiquitinyl-[E2 ubiquitin-conjugating enzyme]-L-cysteine + [acceptor protein]-L-lysine = [E2 ubiquitin-conjugating enzyme]-L-cysteine + N(6)-ubiquitinyl-[acceptor protein]-L-lysine.. Its pathway is protein modification; protein ubiquitination. Its function is as follows. Component of the RNF20/40 E3 ubiquitin-protein ligase complex that mediates monoubiquitination of 'Lys-120' of histone H2B (H2BK120ub1). H2BK120ub1 gives a specific tag for epigenetic transcriptional activation and is also prerequisite for histone H3 'Lys-4' and 'Lys-79' methylation (H3K4me and H3K79me, respectively). It thereby plays a central role inb histone code and gene regulation. The RNF20/40 complex forms a H2B ubiquitin ligase complex in cooperation with the E2 enzyme UBE2A or UBE2B; reports about the cooperation with UBE2E1/UBCH are contradictory. Required for transcriptional activation of Hox genes. Recruited to the MDM2 promoter, probably by being recruited by p53/TP53, and thereby acts as a transcriptional coactivator. Mediates the polyubiquitination of isoform 2 of PA2G4 in cancer cells leading to its proteasome-mediated degradation. In terms of biological role, (Microbial infection) Promotes the human herpesvirus 8 (KSHV) lytic cycle by inducing the expression of lytic viral genes including the latency switch gene RTA/ORF50. This chain is E3 ubiquitin-protein ligase BRE1A (RNF20), found in Homo sapiens (Human).